Consider the following 62-residue polypeptide: KEGYAMDHEGCKFSCFPRPAGFCDGYCKTHLKASSGYCAWPACYCYGVPSNIKVWDYATNKC.

The 62-residue stretch at 1 to 62 (KEGYAMDHEG…KVWDYATNKC (62 aa)) folds into the LCN-type CS-alpha/beta domain. Cystine bridges form between Cys11–Cys62, Cys15–Cys38, Cys23–Cys43, and Cys27–Cys45. Residue Cys62 is modified to Cysteine amide.

This sequence belongs to the long (4 C-C) scorpion toxin superfamily. Sodium channel inhibitor family. Beta subfamily. In terms of tissue distribution, expressed by the venom gland.

The protein localises to the secreted. Its function is as follows. Beta toxins bind voltage-independently at site-4 of sodium channels (Nav) and shift the voltage of activation toward more negative potentials thereby affecting sodium channel activation and promoting spontaneous and repetitive firing. This toxin is active on mammals. This chain is Toxin Tb2, found in Tityus bahiensis (Brazilian scorpion).